The following is a 575-amino-acid chain: Physarolisin (575 aa).

The signal sequence occupies residues 1–18; the sequence is MRLLSLLFLLGLATLSFA. Positions 19–173 are cleaved as a propeptide — removed in mature form; the sequence is VRSQWAQQGR…SIKNARTQVG (155 aa). The Peptidase S53 domain occupies 179 to 574; that stretch reads YIVPYVIFDL…SKLLAFVQTL (396 aa). A glycan (N-linked (GlcNAc...) asparagine) is linked at Asn200. Catalysis depends on charge relay system residues Glu248 and Asp252. Asn262, Asn307, Asn380, and Asn453 each carry an N-linked (GlcNAc...) asparagine glycan. Residue Ser484 is the Charge relay system of the active site. The Ca(2+) site is built by Asp529, Ile530, Gly552, and Asp554.

The cofactor is Ca(2+). In terms of processing, autocatalytically processed. Post-translationally, N-glycosylated.

It catalyses the reaction Milk clotting activity. Preferential cleavage of 8-Gly-|-Ser-9 in B chain of insulin most rapidly, followed by 11-Leu-|-Val-12, 19-Cys(SO(3)H)-|-Gly and 24-Phe-|-Phe-25. No action on Ac-Phe-Tyr(I)2.. With respect to regulation, inhibited by diisopropylfluorophosphate (DFP) and diazoacetyl-D,L-norleucine methyl ester (DAN). The protein is Physarolisin of Physarum polycephalum (Slime mold).